Consider the following 278-residue polypeptide: Sulfur carrier protein FdhD (278 aa).

C120 serves as the catalytic Cysteine persulfide intermediate.

It belongs to the FdhD family.

It is found in the cytoplasm. Its function is as follows. Required for formate dehydrogenase (FDH) activity. Acts as a sulfur carrier protein that transfers sulfur from IscS to the molybdenum cofactor prior to its insertion into FDH. The polypeptide is Sulfur carrier protein FdhD (Bordetella petrii (strain ATCC BAA-461 / DSM 12804 / CCUG 43448)).